The chain runs to 517 residues: Probable bifunctional methylthioribulose-1-phosphate dehydratase/enolase-phosphatase E1 (517 aa).

The tract at residues 1–242 (MACGGCSCEA…CIKLYQLGID (242 aa)) is methylthioribulose-1-phosphate dehydratase. Residue Cys-114 participates in substrate binding. Residues His-132 and His-134 each contribute to the Zn(2+) site. The active-site Proton donor/acceptor; for methylthioribulose-1-phosphate dehydratase activity is the Glu-157. Residue His-207 coordinates Zn(2+). Residues 278–517 (VVLDIEGTTT…FRTIKSFSEI (240 aa)) are enolase-phosphatase E1. Mg(2+) contacts are provided by Asp-281 and Glu-283. Substrate-binding positions include 416–417 (SS) and Lys-450. Residue Asp-476 participates in Mg(2+) binding.

It in the N-terminal section; belongs to the aldolase class II family. MtnB subfamily. The protein in the C-terminal section; belongs to the HAD-like hydrolase superfamily. MasA/MtnC family. Zn(2+) is required as a cofactor. It depends on Mg(2+) as a cofactor.

It carries out the reaction 5-(methylsulfanyl)-D-ribulose 1-phosphate = 5-methylsulfanyl-2,3-dioxopentyl phosphate + H2O. It catalyses the reaction 5-methylsulfanyl-2,3-dioxopentyl phosphate + H2O = 1,2-dihydroxy-5-(methylsulfanyl)pent-1-en-3-one + phosphate. The protein operates within amino-acid biosynthesis; L-methionine biosynthesis via salvage pathway; L-methionine from S-methyl-5-thio-alpha-D-ribose 1-phosphate: step 2/6. It participates in amino-acid biosynthesis; L-methionine biosynthesis via salvage pathway; L-methionine from S-methyl-5-thio-alpha-D-ribose 1-phosphate: step 3/6. It functions in the pathway amino-acid biosynthesis; L-methionine biosynthesis via salvage pathway; L-methionine from S-methyl-5-thio-alpha-D-ribose 1-phosphate: step 4/6. In Sorghum bicolor (Sorghum), this protein is Probable bifunctional methylthioribulose-1-phosphate dehydratase/enolase-phosphatase E1.